The following is a 344-amino-acid chain: Meiotic recombination protein DMC1 homolog A (344 aa).

133–140 (GEFRSGKT) is a binding site for ATP. Arginine 235 contributes to the dsDNA binding site. SsDNA-binding residues include arginine 235, phenylalanine 238, arginine 241, arginine 247, and arginine 315. Residues arginine 241 and arginine 247 each contribute to the dsDNA site.

This sequence belongs to the RecA family. DMC1 subfamily. In terms of tissue distribution, expressed in pollen mother cells and root tips.

The protein localises to the nucleus. Functionally, recombinase that may participate in meiotic recombination, specifically in homologous strand assimilation, which is required for the resolution of meiotic double-strand breaks. Exhibits DNA-dependent ATPase activity when bound to single-stranded DNA (ssDNA). Mediates renaturation of homologous complementary strands as well as assimilation of single strands into homologous supercoiled duplexes leading to D-loop formation. Binds circular single-stranded DNA (ssDNA) and circular double-stranded DNA (dsDNA) in vitro. Catalyzes DNA homologous renaturation and DNA strand exchange. The rates of these activities are dependent on the state of ATP hydrolysis. Forms helical filaments along ssDNA and dsDNA, and promotes strand exchange between ssDNA and dsDNA with long DNA substrates of several thousand base pairs. The presence of the replication protein A is not required for this activity. Seems to be required for homologous pairing and subsequent chromosome segregation during male meiosis. May be not directly required for homologous pairing during male meiosis. Required for synaptonemal complex assembly and crossover formation. Functions redundantly with DMC1B. The sequence is that of Meiotic recombination protein DMC1 homolog A from Oryza sativa subsp. indica (Rice).